The sequence spans 2003 residues: Neurogenic locus notch homolog protein 4 (2003 aa).

The N-terminal stretch at 1–23 (MQPPSLLLLLLLLLLLCVSVVRP) is a signal peptide. 4 EGF-like domains span residues 24–63 (RGLL…ETCQ), 64–115 (FPDP…ERCQ), 118–155 (LEDP…EQCQ), and 156–192 (LRDF…HACE). Over 24 to 1447 (RGLLCGSFPE…TAPPANQLPW (1424 aa)) the chain is Extracellular. 48 cysteine pairs are disulfide-bonded: Cys-28–Cys-41, Cys-35–Cys-51, Cys-53–Cys-62, Cys-68–Cys-80, Cys-74–Cys-103, Cys-105–Cys-114, Cys-122–Cys-133, Cys-127–Cys-143, Cys-145–Cys-154, Cys-160–Cys-171, Cys-165–Cys-180, Cys-182–Cys-191, Cys-198–Cys-211, Cys-205–Cys-220, Cys-222–Cys-231, Cys-238–Cys-249, Cys-243–Cys-262, Cys-264–Cys-273, Cys-280–Cys-291, Cys-285–Cys-300, Cys-302–Cys-311, Cys-318–Cys-332, Cys-326–Cys-341, Cys-343–Cys-352, Cys-359–Cys-370, Cys-364–Cys-379, Cys-381–Cys-390, Cys-396–Cys-407, Cys-401–Cys-418, Cys-420–Cys-429, Cys-436–Cys-452, Cys-446–Cys-461, Cys-463–Cys-472, Cys-479–Cys-490, Cys-484–Cys-499, Cys-501–Cys-510, Cys-517–Cys-528, Cys-522–Cys-537, Cys-539–Cys-548, Cys-555–Cys-566, Cys-560–Cys-575, Cys-577–Cys-586, Cys-593–Cys-604, Cys-598–Cys-613, Cys-615–Cys-624, Cys-629–Cys-640, Cys-634–Cys-649, and Cys-651–Cys-658. Residues 194-232 (DVNECFQDPGPCPKGTSCHNTLGSFQCLCPVGQEGPRCE) enclose the EGF-like 5; calcium-binding domain. The EGF-like 6 domain maps to 234 to 274 (RAGPCPPRGCSNGGTCQLMPEKDSTFHLCLCPPGFIGPDCE). An EGF-like 7; calcium-binding domain is found at 276–312 (NPDNCVSHQCQNGGTCQDGLDTYTCLCPETWTGWDCS). Positions 314–353 (DVDECETQGPPHCRNGGTCQNSAGSFHCVCVSGWGGTSCE) constitute an EGF-like 8; calcium-binding domain. The EGF-like 9; calcium-binding domain maps to 355–391 (NLDDCIAATCAPGSTCIDRVGSFSCLCPPGRTGLLCH). An EGF-like 10 domain is found at 392-430 (LEDMCLSQPCHGDAQCSTNPLTGSTLCLCQPGYSGPTCH). Residues 432–473 (DLDECLMAQQGPSPCEHGGSCLNTPGSFNCLCPPGYTGSRCE) form the EGF-like 11; calcium-binding domain. The EGF-like 12; calcium-binding domain occupies 475-511 (DHNECLSQPCHPGSTCLDLLATFHCLCPPGLEGQLCE). The region spanning 513–549 (ETNECASAPCLNHADCHDLLNGFQCICLPGFSGTRCE) is the EGF-like 13; calcium-binding domain. Residues 551–587 (DIDECRSSPCANGGQCQDQPGAFHCKCLPGFEGPRCQ) enclose the EGF-like 14; calcium-binding domain. The region spanning 589 to 625 (EVDECLSDPCPVGASCLDLPGAFFCLCPSGFTGQLCE) is the EGF-like 15; calcium-binding domain. 14 EGF-like domains span residues 626 to 659 (VPLC…PGCA), 661 to 689 (PEDN…PECE), 691 to 727 (ELGG…PTCS), 729 to 765 (EMTA…PQCQ), 767 to 803 (STDY…PRCE), 806 to 842 (LRPS…GSCQ), 844 to 880 (LMDL…PLCN), 882 to 928 (PLSS…SLCQ), 930 to 966 (HVNP…QNCS), 968 to 1004 (ELDA…LRCE), 1006 to 1044 (DVDE…QWCE), 1046 to 1085 (EIDP…PTCS), 1087 to 1126 (RAPS…PDCL), and 1130 to 1171 (APKG…PRCQ). N-linked (GlcNAc...) asparagine glycosylation occurs at Asn-664. 47 disulfide bridges follow: Cys-665–Cys-672, Cys-667–Cys-677, Cys-679–Cys-688, Cys-695–Cys-706, Cys-700–Cys-715, Cys-717–Cys-726, Cys-733–Cys-744, Cys-738–Cys-753, Cys-755–Cys-764, Cys-771–Cys-782, Cys-776–Cys-791, Cys-793–Cys-802, Cys-810–Cys-821, Cys-815–Cys-830, Cys-832–Cys-841, Cys-848–Cys-859, Cys-853–Cys-868, Cys-870–Cys-879, Cys-886–Cys-907, Cys-901–Cys-916, Cys-918–Cys-927, Cys-934–Cys-945, Cys-939–Cys-954, Cys-956–Cys-965, Cys-972–Cys-983, Cys-977–Cys-992, Cys-994–Cys-1003, Cys-1010–Cys-1023, Cys-1015–Cys-1032, Cys-1034–Cys-1043, Cys-1050–Cys-1061, Cys-1055–Cys-1073, Cys-1075–Cys-1084, Cys-1091–Cys-1102, Cys-1096–Cys-1114, Cys-1116–Cys-1125, Cys-1134–Cys-1146, Cys-1140–Cys-1159, Cys-1161–Cys-1170, Cys-1178–Cys-1191, Cys-1187–Cys-1203, Cys-1214–Cys-1238, Cys-1220–Cys-1233, Cys-1229–Cys-1245, Cys-1251–Cys-1277, Cys-1259–Cys-1272, and Cys-1268–Cys-1284. Residue Asn-714 is glycosylated (N-linked (GlcNAc...) asparagine). N-linked (GlcNAc...) asparagine glycosylation occurs at Asn-964. Asn-1143 is a glycosylation site (N-linked (GlcNAc...) asparagine). LNR repeat units follow at residues 1170–1213 (CQKP…PWKG), 1214–1250 (CPSH…TPPA), and 1251–1294 (CTPA…PEWG). Residues 1347–1371 (AEEKLGGTRDPTYQERAAPQTQPLG) are disordered. A helical membrane pass occupies residues 1448–1468 (PVLCSPVAGVILLALGALLVL). Residues 1469–2003 (QLIRRRRREH…PINQGGEGKK (535 aa)) lie on the Cytoplasmic side of the membrane. The disordered stretch occupies residues 1485–1508 (PGFTRRPRTQSAPHRRRPPLGEDS). A compositionally biased stretch (basic residues) spans 1489–1502 (RRPRTQSAPHRRRP). ANK repeat units follow at residues 1633–1665 (TGET…QPDR), 1666–1698 (AGRT…DART), 1700–1732 (DGTT…ARDK), 1733–1765 (WGKT…AQDN), and 1766–1798 (REQT…LRDQ). Disordered regions lie at residues 1900–1927 (LSGV…RPNP) and 1968–2003 (PPPC…EGKK).

The protein belongs to the NOTCH family. Heterodimer of a C-terminal fragment N(TM) and a N-terminal fragment N(EC) which are probably linked by disulfide bonds. Interacts with MAML1, MAML2 and MAML3 which act as transcriptional coactivators for NOTCH4. In terms of assembly, (Microbial infection) Interacts with Epstein-Barr virus (EBV) RK-BARF0. In terms of processing, synthesized in the endoplasmic reticulum as an inactive form which is proteolytically cleaved by a furin-like convertase in the trans-Golgi network before it reaches the plasma membrane to yield an active, ligand-accessible form. Cleavage results in a C-terminal fragment N(TM) and a N-terminal fragment N(EC). Following ligand binding, it is cleaved by TNF-alpha converting enzyme (TACE) to yield a membrane-associated intermediate fragment called notch extracellular truncation (NEXT). This fragment is then cleaved by presenilin dependent gamma-secretase to release a notch-derived peptide containing the intracellular domain (NICD) from the membrane. Phosphorylated. Highly expressed in the heart, moderately in the lung and placenta and at low levels in the liver, skeletal muscle, kidney, pancreas, spleen, lymph node, thymus, bone marrow and fetal liver. No expression was seen in adult brain or peripheral blood leukocytes.

The protein resides in the cell membrane. Its subcellular location is the nucleus. Functions as a receptor for membrane-bound ligands Jagged1, Jagged2 and Delta1 to regulate cell-fate determination. Upon ligand activation through the released notch intracellular domain (NICD) it forms a transcriptional activator complex with RBPJ/RBPSUH and activates genes of the enhancer of split locus. Affects the implementation of differentiation, proliferation and apoptotic programs. May regulate branching morphogenesis in the developing vascular system. The polypeptide is Neurogenic locus notch homolog protein 4 (Homo sapiens (Human)).